Reading from the N-terminus, the 198-residue chain is Holliday junction branch migration complex subunit RuvA (198 aa).

The segment at methionine 1–histidine 63 is domain I. The tract at residues threonine 64 to lysine 142 is domain II. Residues alanine 143–lysine 147 form a flexible linker region. A domain III region spans residues alanine 148–glycine 198.

It belongs to the RuvA family. In terms of assembly, homotetramer. Forms an RuvA(8)-RuvB(12)-Holliday junction (HJ) complex. HJ DNA is sandwiched between 2 RuvA tetramers; dsDNA enters through RuvA and exits via RuvB. An RuvB hexamer assembles on each DNA strand where it exits the tetramer. Each RuvB hexamer is contacted by two RuvA subunits (via domain III) on 2 adjacent RuvB subunits; this complex drives branch migration. In the full resolvosome a probable DNA-RuvA(4)-RuvB(12)-RuvC(2) complex forms which resolves the HJ.

It localises to the cytoplasm. In terms of biological role, the RuvA-RuvB-RuvC complex processes Holliday junction (HJ) DNA during genetic recombination and DNA repair, while the RuvA-RuvB complex plays an important role in the rescue of blocked DNA replication forks via replication fork reversal (RFR). RuvA specifically binds to HJ cruciform DNA, conferring on it an open structure. The RuvB hexamer acts as an ATP-dependent pump, pulling dsDNA into and through the RuvAB complex. HJ branch migration allows RuvC to scan DNA until it finds its consensus sequence, where it cleaves and resolves the cruciform DNA. The protein is Holliday junction branch migration complex subunit RuvA of Streptococcus pyogenes serotype M12 (strain MGAS2096).